Reading from the N-terminus, the 248-residue chain is mRNA-decapping protein OPG122 (248 aa).

The Nudix hydrolase domain maps to 45-227; sequence HKRVSVSAIL…IAKYALDTAK (183 aa). The Nudix box motif lies at 126–147; that stretch reads GIPKRGENVPECLSREIKEEVN. Glu132 provides a ligand contact to Mg(2+). Glu141 serves as the catalytic Nucleophile. Residue Glu145 coordinates Mn(2+). Asp167 lines the Mg(2+) pocket.

This sequence belongs to the Nudix hydrolase family. The cofactor is Mg(2+). Requires Mn(2+) as cofactor.

It is found in the host mitochondrion. Its function is as follows. Decapping enzyme that remove the protective 5'-cap from both host and viral mRNAs to commit transcripts for decay by the cellular exonuclease XRN1. Preferentially targets spliced mRNAs and since all viral genes are intronless, it preferentially targets host over viral transcripts. Acceleration of the turnover of cellular transcripts promotes the shutoff of host protein synthesis and therefore diminish the magnitude of antiviral response. The chain is mRNA-decapping protein OPG122 (OPG122) from Bos taurus (Bovine).